The primary structure comprises 233 residues: uncharacterized protein (233 aa).

A disordered region spans residues 21–43 (RWRTATSADHPRRGRPAAQAVRR).

This is an uncharacterized protein from Mycobacterium tuberculosis (strain CDC 1551 / Oshkosh).